Consider the following 303-residue polypeptide: uncharacterized protein (303 aa).

The 128-residue stretch at 173–300 folds into the Fe2OG dioxygenase domain; sequence KLPELLGQLN…RFTVNGWIRK (128 aa).

Requires Fe(2+) as cofactor. The cofactor is L-ascorbate.

This is an uncharacterized protein from Synechocystis sp. (strain ATCC 27184 / PCC 6803 / Kazusa).